A 108-amino-acid chain; its full sequence is MELQFDEKGLIPVITQDVKTKEVLMLAYANEEAIKLTLKTGFAHYWSRSRKKLWKKGETSGNVQRVVEIRYDCDCDALLYLVEQKGNACHTGNYSCFYRRLEGDEVRC.

Asp72 contacts Mg(2+). Cys73 is a Zn(2+) binding site. The Mg(2+) site is built by Asp74 and Asp76. Residues Cys89 and Cys96 each coordinate Zn(2+).

It belongs to the PRA-CH family. In terms of assembly, homodimer. The cofactor is Mg(2+). Zn(2+) serves as cofactor.

It localises to the cytoplasm. It carries out the reaction 1-(5-phospho-beta-D-ribosyl)-5'-AMP + H2O = 1-(5-phospho-beta-D-ribosyl)-5-[(5-phospho-beta-D-ribosylamino)methylideneamino]imidazole-4-carboxamide. It functions in the pathway amino-acid biosynthesis; L-histidine biosynthesis; L-histidine from 5-phospho-alpha-D-ribose 1-diphosphate: step 3/9. Its function is as follows. Catalyzes the hydrolysis of the adenine ring of phosphoribosyl-AMP. This is Phosphoribosyl-AMP cyclohydrolase from Archaeoglobus fulgidus (strain ATCC 49558 / DSM 4304 / JCM 9628 / NBRC 100126 / VC-16).